The chain runs to 84 residues: Large ribosomal subunit protein bL27 (84 aa).

The disordered stretch occupies residues 1–22 (MAHKKGASSTRNGRDSNAQRLG). The span at 7–19 (ASSTRNGRDSNAQ) shows a compositional bias: polar residues.

The protein belongs to the bacterial ribosomal protein bL27 family.

The sequence is that of Large ribosomal subunit protein bL27 from Streptomyces avermitilis (strain ATCC 31267 / DSM 46492 / JCM 5070 / NBRC 14893 / NCIMB 12804 / NRRL 8165 / MA-4680).